Here is a 424-residue protein sequence, read N- to C-terminus: Histidine--tRNA ligase (424 aa).

Belongs to the class-II aminoacyl-tRNA synthetase family. In terms of assembly, homodimer.

The protein resides in the cytoplasm. The enzyme catalyses tRNA(His) + L-histidine + ATP = L-histidyl-tRNA(His) + AMP + diphosphate + H(+). The chain is Histidine--tRNA ligase from Salmonella gallinarum (strain 287/91 / NCTC 13346).